Consider the following 425-residue polypeptide: Gamma-glutamyl phosphate reductase (425 aa).

Belongs to the gamma-glutamyl phosphate reductase family.

Its subcellular location is the cytoplasm. It catalyses the reaction L-glutamate 5-semialdehyde + phosphate + NADP(+) = L-glutamyl 5-phosphate + NADPH + H(+). The protein operates within amino-acid biosynthesis; L-proline biosynthesis; L-glutamate 5-semialdehyde from L-glutamate: step 2/2. Catalyzes the NADPH-dependent reduction of L-glutamate 5-phosphate into L-glutamate 5-semialdehyde and phosphate. The product spontaneously undergoes cyclization to form 1-pyrroline-5-carboxylate. This is Gamma-glutamyl phosphate reductase from Opitutus terrae (strain DSM 11246 / JCM 15787 / PB90-1).